A 23-amino-acid polypeptide reads, in one-letter code: MDKLAAGGLYLLFLLLAGIIVTH.

The sequence is that of Putative gene 50 protein (50) from Bacillus subtilis (Bacteriophage SP01).